The chain runs to 195 residues: Protein GrpE (195 aa).

Belongs to the GrpE family. Homodimer.

It localises to the cytoplasm. Functionally, participates actively in the response to hyperosmotic and heat shock by preventing the aggregation of stress-denatured proteins, in association with DnaK and GrpE. It is the nucleotide exchange factor for DnaK and may function as a thermosensor. Unfolded proteins bind initially to DnaJ; upon interaction with the DnaJ-bound protein, DnaK hydrolyzes its bound ATP, resulting in the formation of a stable complex. GrpE releases ADP from DnaK; ATP binding to DnaK triggers the release of the substrate protein, thus completing the reaction cycle. Several rounds of ATP-dependent interactions between DnaJ, DnaK and GrpE are required for fully efficient folding. This Francisella tularensis subsp. holarctica (strain OSU18) protein is Protein GrpE.